Consider the following 400-residue polypeptide: Queuine tRNA-ribosyltransferase (400 aa).

Aspartate 93 serves as the catalytic Proton acceptor. Substrate-binding positions include 93–97 (DSGGF), aspartate 166, and glycine 247. Residues 277–283 (GIGDVDD) form an RNA binding region. Catalysis depends on aspartate 296, which acts as the Nucleophile. The segment at 301–305 (TRLGR) is RNA binding; important for wobble base 34 recognition. Positions 338, 340, 343, and 369 each coordinate Zn(2+).

This sequence belongs to the queuine tRNA-ribosyltransferase family. Homodimer. Within each dimer, one monomer is responsible for RNA recognition and catalysis, while the other monomer binds to the replacement base PreQ1. The cofactor is Zn(2+).

The catalysed reaction is 7-aminomethyl-7-carbaguanine + guanosine(34) in tRNA = 7-aminomethyl-7-carbaguanosine(34) in tRNA + guanine. The protein operates within tRNA modification; tRNA-queuosine biosynthesis. Functionally, catalyzes the base-exchange of a guanine (G) residue with the queuine precursor 7-aminomethyl-7-deazaguanine (PreQ1) at position 34 (anticodon wobble position) in tRNAs with GU(N) anticodons (tRNA-Asp, -Asn, -His and -Tyr). Catalysis occurs through a double-displacement mechanism. The nucleophile active site attacks the C1' of nucleotide 34 to detach the guanine base from the RNA, forming a covalent enzyme-RNA intermediate. The proton acceptor active site deprotonates the incoming PreQ1, allowing a nucleophilic attack on the C1' of the ribose to form the product. After dissociation, two additional enzymatic reactions on the tRNA convert PreQ1 to queuine (Q), resulting in the hypermodified nucleoside queuosine (7-(((4,5-cis-dihydroxy-2-cyclopenten-1-yl)amino)methyl)-7-deazaguanosine). This is Queuine tRNA-ribosyltransferase from Roseiflexus sp. (strain RS-1).